A 646-amino-acid chain; its full sequence is bZIP transcription factor 39 (646 aa).

Topologically, residues 1–311 are cytoplasmic; sequence MAEPALLDPT…KSKSKTKTKK (311 aa). A disordered region spans residues 25-172; sequence HELPLAGGGG…GGTVCEEEED (148 aa). Residues 43-53 show a composition bias toward low complexity; sequence LDGLEFDLPGD. A compositionally biased stretch (basic and acidic residues) spans 59-69; it reads FLLRSPERDDS. Low complexity predominate over residues 71–98; it reads EGSAAGSGPTASPSSSPTTSASNSAVAN. The span at 103 to 113 shows a compositional bias: basic and acidic residues; that stretch reads EVKHEESDEGR. Residues 159–172 show a composition bias toward acidic residues; the sequence is DSDEGGTVCEEEED. The bZIP domain occupies 172-232; sequence DERRAARLMR…AENATLRQQL (61 aa). Residues 174 to 205 are basic motif; it reads RRAARLMRNRESAQLSRQRKKRYVEELEEKVK. Positions 211–218 are leucine-zipper; sequence INDLNSRI. The tract at residues 272 to 308 is disordered; that stretch reads LVPIPRLKPQQPVPSSKVVKKPESKKTVENKSKSKTK. The span at 279-288 shows a compositional bias: low complexity; sequence KPQQPVPSSK. The segment covering 291-303 has biased composition (basic and acidic residues); sequence KKPESKKTVENKS. The chain crosses the membrane as a helical span at residues 312–332; the sequence is VASVSLLGLLLIMLVFGAFIP. Topologically, residues 333-646 are lumenal; the sequence is GFNHNFGMCG…FKSSSPHLVN (314 aa). N-linked (GlcNAc...) asparagine glycans are attached at residues Asn-371, Asn-399, Asn-525, Asn-530, Asn-565, and Asn-571. The interval 560-585 is disordered; sequence TGKTANNTEPFNRTSESSSKLPDSKP. Positions 562–585 are enriched in polar residues; sequence KTANNTEPFNRTSESSSKLPDSKP.

The protein belongs to the bZIP family. In terms of tissue distribution, highly expressed in leaf blade, and at lower levels in roots, leaf sheaths, flowers and seeds.

Its subcellular location is the endoplasmic reticulum membrane. It localises to the nucleus. Functionally, transcription factor involved in endoplasmic reticulum (ER) stress response. Acts as a ER stress sensor and activates the transcription factor BZIP50 and the chaperone BIP1. The protein is bZIP transcription factor 39 of Oryza sativa subsp. japonica (Rice).